Consider the following 397-residue polypeptide: Acetate kinase (397 aa).

Position 8 (asparagine 8) interacts with Mg(2+). An ATP-binding site is contributed by lysine 15. Residue arginine 89 participates in substrate binding. Residue aspartate 146 is the Proton donor/acceptor of the active site. Residues 206–210 (HLGNG), 281–283 (DLR), and 329–333 (GIGEN) contribute to the ATP site. Glutamate 382 contributes to the Mg(2+) binding site.

The protein belongs to the acetokinase family. As to quaternary structure, homodimer. Mg(2+) is required as a cofactor. Requires Mn(2+) as cofactor.

It is found in the cytoplasm. The enzyme catalyses acetate + ATP = acetyl phosphate + ADP. It functions in the pathway metabolic intermediate biosynthesis; acetyl-CoA biosynthesis; acetyl-CoA from acetate: step 1/2. Its function is as follows. Catalyzes the formation of acetyl phosphate from acetate and ATP. Can also catalyze the reverse reaction. The polypeptide is Acetate kinase (Geobacillus sp. (strain WCH70)).